Reading from the N-terminus, the 82-residue chain is Sec-independent protein translocase protein TatA (82 aa).

Residues 1 to 21 form a helical membrane-spanning segment; it reads MGIFDWKHWIVILIVVVLVFG. The interval 43 to 82 is disordered; sequence VNTEEDDKKDQPAAQPAQPLNQPHTIDAQAQKVEEPARKD.

The protein belongs to the TatA/E family. The Tat system comprises two distinct complexes: a TatABC complex, containing multiple copies of TatA, TatB and TatC subunits, and a separate TatA complex, containing only TatA subunits. Substrates initially bind to the TatABC complex, which probably triggers association of the separate TatA complex to form the active translocon.

It localises to the cell inner membrane. Part of the twin-arginine translocation (Tat) system that transports large folded proteins containing a characteristic twin-arginine motif in their signal peptide across membranes. TatA could form the protein-conducting channel of the Tat system. This is Sec-independent protein translocase protein TatA from Pseudomonas aeruginosa (strain LESB58).